The following is a 478-amino-acid chain: Shikimate biosynthesis protein AroDE (478 aa).

A 3-dehydroquinate dehydratase region spans residues 1–208 (MLCTTISGPS…LKHHYFYNFA (208 aa)). 3-dehydroquinate contacts are provided by residues Ser21, 29 to 31 (EMR), and 55 to 57 (AWK). His110 (proton donor/acceptor; for 3-dehydroquinate dehydratase activity) is an active-site residue. Residue Lys133 is the Schiff-base intermediate with substrate; for 3-dehydroquinate dehydratase activity of the active site. 2 residues coordinate 3-dehydroquinate: Arg171 and Gln196. Positions 209-478 (SLSAQSPICA…VLASLFSIAP (270 aa)) are shikimate 5-dehydrogenase. 226–228 (SIG) lines the shikimate pocket. Lys277 (proton acceptor; for shikimate dehydrogenase activity) is an active-site residue. Shikimate contacts are provided by Asn298 and Asp313. NADP(+) contacts are provided by residues 337–341 (GAGGA), 360–362 (NRT), and Gly435. Shikimate is bound at residue Gln442.

The protein in the N-terminal section; belongs to the type-I 3-dehydroquinase family. In the C-terminal section; belongs to the shikimate dehydrogenase family.

It carries out the reaction 3-dehydroquinate = 3-dehydroshikimate + H2O. It catalyses the reaction shikimate + NADP(+) = 3-dehydroshikimate + NADPH + H(+). It participates in metabolic intermediate biosynthesis; chorismate biosynthesis; chorismate from D-erythrose 4-phosphate and phosphoenolpyruvate: step 3/7. The protein operates within metabolic intermediate biosynthesis; chorismate biosynthesis; chorismate from D-erythrose 4-phosphate and phosphoenolpyruvate: step 4/7. Its function is as follows. Bifunctional enzyme that catalyzes two sequential steps of the aromatic amino acids biosynthetic pathway. In the first reaction, the AroD domain catalyzes the cis-dehydration of 3-dehydroquinate (DHQ) and introduces the first double bond of the aromatic ring to yield 3-dehydroshikimate; in the second reaction, the AroE domain catalyzes the reversible NADPH linked reduction of 3-dehydroshikimate (DHSA) to yield shikimate (SA). The sequence is that of Shikimate biosynthesis protein AroDE from Chlamydia trachomatis serovar D (strain ATCC VR-885 / DSM 19411 / UW-3/Cx).